The primary structure comprises 446 residues: MTIYTFTSSEPHIAIVGGGIVGVILTLGLLRQNVSVRLYEQSAGFREIGAGIAFTASARRCMELMDPAIIDALRRCGAVSVSDKVADEDDHLRWIDGYNQHSKAHPTYQKPLAEICGSGFQGCRRDQLLEELAKHIPSGTIMFHKRLDTIQQGKDHKMILNFVDGSSNQADAVIGCDGIKSRVRQHLFGDNHPASFPQYTHKVAYRGLVPMDRAIEILGTWKAHNFHHHVGPGAHLTHYPVANHTALNVVVFLSDETPWPDSTTMVSKGTRSEVEKALQGWHPTVLGIVNLLPDELSKWALFDQGEFPLPHYSKGRICLAGDAAHASSPHHGAGACLGVEDALCLSTLLSQVRTTLTQADEGSKDKSESSMGQLLEAAFETFNLVRRTRTQWLVNSSRRVCDLYHQQEWADPIRCPKAETCFEEIRDRSYKIWHFDVDGMLEQTRT.

The helical transmembrane segment at 10 to 30 (EPHIAIVGGGIVGVILTLGLL) threads the bilayer. Residue Asn-33 is glycosylated (N-linked (GlcNAc...) asparagine). 3 residues coordinate FAD: Glu-40, Ala-53, and Arg-125. Active-site residues include Arg-206 and Tyr-239. N-linked (GlcNAc...) asparagine glycosylation is present at Asn-243. FAD-binding residues include Asp-322 and Ala-335. Residue Asn-395 is glycosylated (N-linked (GlcNAc...) asparagine).

Belongs to the paxM FAD-dependent monooxygenase family. It depends on FAD as a cofactor.

The protein localises to the membrane. It functions in the pathway secondary metabolite biosynthesis; terpenoid biosynthesis. Its function is as follows. FAD-dependent monooxygenase; part of the gene cluster that mediates the biosynthesis of eupenifeldin, a bistropolone meroterpenoid that acts as an antitumor agent. The first step of eupenifeldin biosynthesis is the biosynthesis of 3-methylorcinaldehyde performed by the non-reducing polyketide synthase eupA. Oxidative dearomatization of 3-methylorcinaldehyde likely catalyzed by the FAD-dependent monooxygenase eupB is followed by oxidative ring expansion by the 2-oxoglutarate-dependent dioxygenase eupC to provide the first tropolone metabolite, tropolone stipitaldehyde. In parallel, generation of sesquiterpene alpha-humulene from farnesylpyrophosphate (FPP) is catalyzed by the terpene cyclase eupE. The cytochrome P450 monooxygenase eupD then hydroxylates humulene to humulenol. The putative Diels-Alderase eupF probably catalyzes the formation of the tropolone-humulene skeleton by linking humulenol and the polyketide moiety. The short-chain dehydrogenase/reductase eupG and the flavin-dependent monooxygenase eupH are also essential for eupenifeldin biosynthesis and are likely the additional decorating enzymes of the tropolone-humulene skeleton to produce final eupenifeldin or derivatives. This is FAD-dependent monooxygenase eupB from Phoma sp.